A 430-amino-acid polypeptide reads, in one-letter code: Adenylosuccinate synthetase (430 aa).

Residues 12–18 (GDEGKGK) and 40–42 (GHT) each bind GTP. Asp-13 functions as the Proton acceptor in the catalytic mechanism. Residues Asp-13 and Gly-40 each contribute to the Mg(2+) site. Residues 13–16 (DEGK), 38–41 (NAGH), Thr-128, Arg-142, Gln-223, Thr-238, and Arg-302 contribute to the IMP site. His-41 functions as the Proton donor in the catalytic mechanism. Residue 298-304 (VNTGRKR) coordinates substrate. Residues Arg-304, 330–332 (KLD), and 412–414 (GVG) each bind GTP.

This sequence belongs to the adenylosuccinate synthetase family. As to quaternary structure, homodimer. Mg(2+) serves as cofactor.

It localises to the cytoplasm. It catalyses the reaction IMP + L-aspartate + GTP = N(6)-(1,2-dicarboxyethyl)-AMP + GDP + phosphate + 2 H(+). Its pathway is purine metabolism; AMP biosynthesis via de novo pathway; AMP from IMP: step 1/2. Plays an important role in the de novo pathway of purine nucleotide biosynthesis. Catalyzes the first committed step in the biosynthesis of AMP from IMP. The polypeptide is Adenylosuccinate synthetase (Corynebacterium glutamicum (strain ATCC 13032 / DSM 20300 / JCM 1318 / BCRC 11384 / CCUG 27702 / LMG 3730 / NBRC 12168 / NCIMB 10025 / NRRL B-2784 / 534)).